Consider the following 362-residue polypeptide: Type-2 angiotensin II receptor (362 aa).

Over 1 to 44 (MKANFSLATISKNITSSLHVGFVNISSNESTFNCSHKPSDKHLD) the chain is Extracellular. N-linked (GlcNAc...) asparagine glycosylation is found at Asn4, Asn13, Asn24, Asn28, and Asn33. 2 cysteine pairs are disulfide-bonded: Cys34-Cys289 and Cys116-Cys194. The helical transmembrane segment at 45–69 (AIPVLYYIIFGVGFLVNTIVVTLFC) threads the bilayer. Over 70–79 (CQKGPKKVSS) the chain is Cytoplasmic. A helical transmembrane segment spans residues 80–103 (IYIFNLAVADLLLLATLPLWATYY). 2 residues coordinate angiotensin II: Tyr102 and Tyr103. Over 104 to 113 (SHRYDWIFGP) the chain is Extracellular. Residues 114-139 (VMCKVFGSFLTLNMFASIFFITCMSV) traverse the membrane as a helical segment. The Cytoplasmic portion of the chain corresponds to 140 to 158 (DRYQSVIYPFLSQRRNPWQ). The helical transmembrane segment at 159 to 180 (ASYIVPLVWCMACLSSLPTFYF) threads the bilayer. The angiotensin II site is built by Arg181, Tyr203, and Lys214. Residues 181–205 (RDVRTIEYLGVNACIMAFPPEKYAQ) lie on the Extracellular side of the membrane. Residues 206-231 (WSAGIALMKNILGFIIPLIFIATCYF) traverse the membrane as a helical segment. Residues 232-256 (GIRKHLLKTNSYGKNRITRDQVLKM) lie on the Cytoplasmic side of the membrane. A helical transmembrane segment spans residues 257 to 280 (AAAVVLAFIICWLPFHVLTFLDAL). Asp278 provides a ligand contact to angiotensin II. Topologically, residues 281 to 293 (AWMGVINSCEVIA) are extracellular. A helical transmembrane segment spans residues 294–319 (VIDLALPFAILLGFTNSCINPFLYCF). Asp296 serves as a coordination point for angiotensin II. The Cytoplasmic portion of the chain corresponds to 320–362 (VGNRFQQKLRRVFRVPITWLQGKRENGSCGKSSSFREMETFVS). Positions 323–332 (RFQQKLRRVF) are helix VIII.

The protein belongs to the G-protein coupled receptor 1 family. In terms of assembly, interacts with MTUS1.

The protein resides in the cell membrane. Its function is as follows. Receptor for angiotensin II, a vasoconstricting peptide. Signals primarily via a non-canonical G-protein- and beta-arrestin independent pathways. Cooperates with MTUS1 to inhibit ERK2 activation and cell proliferation. This is Type-2 angiotensin II receptor (AGTR2) from Ovis aries (Sheep).